Here is a 426-residue protein sequence, read N- to C-terminus: Actin-like protein 6B (426 aa).

The segment at 39-82 is essential for mediating its function in dendritic development; may contribute to neuronal-specific targeting; it reads TTVGLLAAEEGGGLELEGDKEKKGKIFHIDTNALHVPRDGAEVM.

It belongs to the actin family. As to quaternary structure, component of the multiprotein chromatin-remodeling complexes SWI/SNF: SWI/SNF-A (BAF), SWI/SNF-B (PBAF) and related complexes. The canonical complex contains a catalytic subunit (either SMARCA4/BRG1/BAF190A or SMARCA2/BRM/BAF190B) and at least SMARCE1, ACTL6A/BAF53, SMARCC1/BAF155, SMARCC2/BAF170 and SMARCB1/SNF5/BAF47. Other subunits specific to each of the complexes may also be present permitting several possible combinations developmentally and tissue specific. Component of the BAF complex, which includes at least actin (ACTB), ARID1A/BAF250A, ARID1B/BAF250B, SMARCA2/BRM, SMARCA4/BRG1/BAF190A, ACTL6A/BAF53, ACTL6B/BAF53B, SMARCE1/BAF57, SMARCC1/BAF155, SMARCC2/BAF170, SMARCB1/SNF5/INI1 and one or more SMARCD1/BAF60A, SMARCD2/BAF60B, or SMARCD3/BAF60C. Component of neuron-specific chromatin remodeling complex (nBAF complex) composed of at least, ARID1A/BAF250A or ARID1B/BAF250B, SMARCD1/BAF60A or SMARCD2/BAF60B or SMARCD3/BAF60C, SMARCA2/BRM/BAF190B, SMARCA4/BRG1/BAF190A, SMARCB1/BAF47, SMARCC1/BAF155, SMARCE1/BAF57, SMARCC2/BAF170, DPF1/BAF45B, DPF3/BAF45C, ACTL6B/BAF53B and actin (ACTB). Note that the nBAF complex is polymorphic in regard to the ATPase, SMARCA2 and SMARCA4 occupying mutually exclusive positions. May be a component of the SWI/SNF-B (PBAF) chromatin remodeling complex, at least composed of SMARCA4/BRG1, SMARCB1/BAF47/SNF5, ACTL6A/BAF53A or ACTL6B/BAF53B, SMARCE1/BAF57, SMARCD1/BAF60A, SMARCD2/BAF60B, perhaps SMARCD3/BAF60C, SMARCC1/BAF155, SMARCC2/BAF170, PBRM1/BAF180, ARID2/BAF200 and actin.

It is found in the nucleus. Functionally, involved in transcriptional activation and repression of select genes by chromatin remodeling (alteration of DNA-nucleosome topology). Component of SWI/SNF chromatin remodeling complexes that carry out key enzymatic activities, changing chromatin structure by altering DNA-histone contacts within a nucleosome in an ATP-dependent manner. Belongs to the neuron-specific chromatin remodeling complex (nBAF complex), as such plays a role in remodeling mononucleosomes in an ATP-dependent fashion, and is required for postmitotic neural development and dendritic outgrowth. During neural development a switch from a stem/progenitor to a postmitotic chromatin remodeling mechanism occurs as neurons exit the cell cycle and become committed to their adult state. The transition from proliferating neural stem/progenitor cells to postmitotic neurons requires a switch in subunit composition of the npBAF and nBAF complexes. As neural progenitors exit mitosis and differentiate into neurons, npBAF complexes which contain ACTL6A/BAF53A and PHF10/BAF45A, are exchanged for homologous alternative ACTL6B/BAF53B and DPF1/BAF45B or DPF3/BAF45C subunits in neuron-specific complexes (nBAF). The npBAF complex is essential for the self-renewal/proliferative capacity of the multipotent neural stem cells. The nBAF complex along with CREST plays a role regulating the activity of genes essential for dendrite growth. ACTL6B/BAF53B is not essential for assembly of the nBAF complex but is required for targeting the complex and CREST to the promoter of genes essential for dendritic growth. Essential for neuronal maturation and dendrite development. The protein is Actin-like protein 6B of Homo sapiens (Human).